The primary structure comprises 466 residues: 3-isopropylmalate dehydratase large subunit (466 aa).

Positions 347, 407, and 410 each coordinate [4Fe-4S] cluster.

This sequence belongs to the aconitase/IPM isomerase family. LeuC type 1 subfamily. Heterodimer of LeuC and LeuD. [4Fe-4S] cluster serves as cofactor.

The catalysed reaction is (2R,3S)-3-isopropylmalate = (2S)-2-isopropylmalate. It functions in the pathway amino-acid biosynthesis; L-leucine biosynthesis; L-leucine from 3-methyl-2-oxobutanoate: step 2/4. Functionally, catalyzes the isomerization between 2-isopropylmalate and 3-isopropylmalate, via the formation of 2-isopropylmaleate. This Cronobacter sakazakii (strain ATCC BAA-894) (Enterobacter sakazakii) protein is 3-isopropylmalate dehydratase large subunit.